The chain runs to 171 residues: Translationally-controlled tumor protein homolog (171 aa).

Residues 1 to 171 (MIIYKDIITG…FKDGLEIEKC (171 aa)) form the TCTP domain.

It belongs to the TCTP family.

It is found in the cytoplasm. Its function is as follows. Involved in calcium binding and microtubule stabilization. This Danio rerio (Zebrafish) protein is Translationally-controlled tumor protein homolog (tpt1).